The sequence spans 354 residues: MNEFKPLVFSGVQPTGNLHLGNYLGAIRKFVALQENNDCIYCVVDLHSITAQLVHEDLPGQIRSIAAAFIASGIDPEKHIVFNQSAVPQHAELAWIFNCVARIGWMNRMTQFKDKAGKDRENASLGLLAYPSLMAADILVYRATHVPVGDDQKQHLELTRDIAQKFNIDFMEHIRRGGYGVDIVVGEEPIHAYFPPVEPLIGGPAPRVMSLRDGTKKMSKSDPSDLSRINLMDDADTILKKIRKAKTDPDALPSEADGLKDRPEAENLVGIYAALADRSKEEVLAEFGGQQFSTFKPALADLAVSVLSPITGEMRRLMGDTAHIDAILRKGGERARERAETTMREVREIIGFLQ.

ATP-binding positions include 13–15 and 21–22; these read QPT and GN. The 'HIGH' region motif lies at 14-22; it reads PTGNLHLGN. Asp137 serves as a coordination point for L-tryptophan. ATP is bound by residues 149 to 151, Val208, and 217 to 221; these read GDD and KMSKS. Residues 217-221 carry the 'KMSKS' region motif; the sequence is KMSKS.

It belongs to the class-I aminoacyl-tRNA synthetase family. As to quaternary structure, homodimer.

Its subcellular location is the cytoplasm. It carries out the reaction tRNA(Trp) + L-tryptophan + ATP = L-tryptophyl-tRNA(Trp) + AMP + diphosphate + H(+). Its function is as follows. Catalyzes the attachment of tryptophan to tRNA(Trp). The polypeptide is Tryptophan--tRNA ligase (Rhizobium meliloti (strain 1021) (Ensifer meliloti)).